The primary structure comprises 287 residues: ATP synthase gamma chain (287 aa).

It belongs to the ATPase gamma chain family. In terms of assembly, F-type ATPases have 2 components, CF(1) - the catalytic core - and CF(0) - the membrane proton channel. CF(1) has five subunits: alpha(3), beta(3), gamma(1), delta(1), epsilon(1). CF(0) has three main subunits: a, b and c.

It localises to the cell inner membrane. Functionally, produces ATP from ADP in the presence of a proton gradient across the membrane. The gamma chain is believed to be important in regulating ATPase activity and the flow of protons through the CF(0) complex. The polypeptide is ATP synthase gamma chain (Methylococcus capsulatus (strain ATCC 33009 / NCIMB 11132 / Bath)).